The chain runs to 184 residues: NADH dehydrogenase [ubiquinone] 1 alpha subcomplex assembly factor 3 (184 aa).

This sequence belongs to the NDUFAF3 family. As to quaternary structure, interacts with NDUFAF4, NDUFS2 and NDUFS3.

It localises to the nucleus. Its subcellular location is the mitochondrion inner membrane. Functionally, essential factor for the assembly of mitochondrial NADH:ubiquinone oxidoreductase complex (complex I). The sequence is that of NADH dehydrogenase [ubiquinone] 1 alpha subcomplex assembly factor 3 (NDUFAF3) from Homo sapiens (Human).